Consider the following 313-residue polypeptide: MESIFFMIGFENQYQIGLVESSYDDNPDDYLTTNGLYFTNAKYISDYFNQGTTLFEIKLPIDDNEFKYIRTGDRWRANRLNLVKSYSLFDSETYNKFGLNITDNKYIMDFASSLGKIDFLDKTRSLKLLYTNKSLDEASINGHISVLNWWKHSGLKLKYTELSIDGASGRGHIDVLNWWLNLAIYSKIKFKYTQQAINSASKNGKTDSLEWWKRTRLPLIYTTEAIDAASMKRKINSLDWWLKSGLQIEYTVSSMDHASWNNHTDVLDWWLKSGLELKYSKNCNNWIDRFGRTDILDWWEKSGLKIKFKHEIY.

This is an uncharacterized protein from Acanthamoeba polyphaga mimivirus (APMV).